We begin with the raw amino-acid sequence, 575 residues long: Bifunctional decalin synthase calF (575 aa).

The N-terminal stretch at 1 to 18 (MSFKPLLLSLSLLSPALG) is a signal peptide. 9 N-linked (GlcNAc...) asparagine glycosylation sites follow: Asn46, Asn103, Asn127, Asn175, Asn268, Asn308, Asn359, Asn425, and Asn485. Residues 118–297 (LGNYASYSIN…LSMTTKVFQD (180 aa)) form the FAD-binding PCMH-type domain.

It belongs to the oxygen-dependent FAD-linked oxidoreductase family.

The protein operates within secondary metabolite biosynthesis. Functionally, bifunctional decaline synthase; part of the gene cluster that mediates the biosynthesis of calbistrin A and related compounds. Calbistrin A is a secondary metabolite with an interesting structure that was recently found to have bioactivity against leukemia cells. It consists of two polyketides linked by an ester bond: a bicyclic decalin containing polyketide and a linear 12 carbon dioic acid structure. The polyketide synthase calA is probably responsible for forming the decalin moiety. Because calA lacks a designated enoylreductase (ER) domain, the required activity is provided by the trans-enoyl reductase calK. Following release from the PKS, calF then probably catalyzes the oxidation and the subsequent Diels Alder cycloisomerization that lead to the formation of the decalin moiety. The decalin polyketide backbone includes two C-methyl groups, at C7 and C11 in backbone, of which the C7 position is probably methylated by the methyltransferase domain of calA. A candidate for adding the methyl group at C11, if not done by CalA, is the cluster methyltransferase calH. Several additional tailoring enzymes within the cluster could be involved in the modification of the decalin polyketide product. Those include the 3 cytochrome P450 monooxygenases CalE, CalG and CalL, of which one might be responsible for the introduction of the extra hydroxyl group attached to the backbone of the decalin moiety, at position C9 in the backbone, that allows for attachment of the linear moiety. One tailoring enzyme activity that is expected to be involved in biosynthesis of calbistrin is an acyltransferase for connecting the two polyketide synthase products, and which could be performed by the cluster acyltransferase calJ. The enzyme responsible for the biosynthesis of the linear moiety, probably a second PKS, has not been identified yet. This Penicillium decumbens protein is Bifunctional decalin synthase calF.